The following is a 318-amino-acid chain: CMRF35-like molecule 8 (318 aa).

The first 27 residues, 1–27, serve as a signal peptide directing secretion; sequence MTQLASAVWLPTLLLLLLLFWLPGCVP. The region spanning 28-129 is the Ig-like V-type domain; that stretch reads LHGPSTMSGS…FDGSLGFDKY (102 aa). Over 28–185 the chain is Extracellular; it reads LHGPSTMSGS…HDYSQGLRLP (158 aa). C46 and C113 are oxidised to a cystine. An N-linked (GlcNAc...) asparagine glycan is attached at N93. A compositionally biased stretch (low complexity) spans 139-148; that stretch reads SEDPVSSPGP. Residues 139–174 are disordered; sequence SEDPVSSPGPTLETPVVSTSLPTKGPALGSNTEGHR. A helical membrane pass occupies residues 186–206; sequence ALLSVLALLLFLLVGTSLLAW. The Cytoplasmic segment spans residues 207 to 318; sequence RMFQKRLVKA…PRKGLSDLYL (112 aa). Polar residues predominate over residues 284 to 296; the sequence is QDSHANGDSLHQP. The disordered stretch occupies residues 284-318; the sequence is QDSHANGDSLHQPQDQKAEYSEIQKPRKGLSDLYL. Over residues 297–308 the composition is skewed to basic and acidic residues; sequence QDQKAEYSEIQK. Y303 is modified (phosphotyrosine).

The protein belongs to the CD300 family. As to quaternary structure, upon tyrosine-phosphorylation, interacts with PTN6/SHP-1 and PTPN11/SHP-2 and INPP5D. Phosphorylated on tyrosine. Post-translationally, N-glycosylated. Present on the surface of the majority of myeloid cells and a subset of B-cells. Present on the surface of NK cells after IL-12 stimulation.

The protein resides in the cell membrane. Inhibitory receptor which may contribute to the down-regulation of cytolytic activity in natural killer (NK) cells, and to the down-regulation of mast cell degranulation. Negatively regulates the Toll-like receptor (TLR) signaling mediated by MYD88 but not TRIF through activation of PTPN6. The chain is CMRF35-like molecule 8 (Cd300a) from Mus musculus (Mouse).